The primary structure comprises 120 residues: Fumarate reductase subunit D (120 aa).

Transmembrane regions (helical) follow at residues 25–45 (FAML…LGVI), 55–75 (VAGF…ISMP), and 100–120 (IACY…IFMI).

The protein belongs to the FrdD family. In terms of assembly, part of an enzyme complex containing four subunits: a flavoprotein (FrdA), an iron-sulfur protein (FrdB), and two hydrophobic anchor proteins (FrdC and FrdD).

It is found in the cell inner membrane. In terms of biological role, anchors the catalytic components of the fumarate reductase complex to the cell membrane, binds quinones. The chain is Fumarate reductase subunit D from Aliivibrio fischeri (strain MJ11) (Vibrio fischeri).